A 725-amino-acid chain; its full sequence is Beta-adducin (725 aa).

The segment at 1–22 (MSEDTVPEAASPPPSQGQHYFD) is disordered. Phosphoserine is present on residues Ser-11 and Ser-25. Phosphothreonine is present on Thr-55. 2 positions are modified to phosphoserine: Ser-60 and Ser-344. The tract at residues 425–444 (KQQKEKTRWLNTPNTYLRVN) is interaction with calmodulin. The tract at residues 525-725 (AEKSRSPSTE…KSKKKEKVES (201 aa)) is disordered. 2 positions are modified to phosphoserine: Ser-530 and Ser-532. Thr-533 carries the phosphothreonine modification. Ser-535 is subject to Phosphoserine. Thr-561 carries the post-translational modification Phosphothreonine. Basic and acidic residues predominate over residues 566 to 588 (EEYKKEVERKKLEQEQEGEKDAA). Ser-594, Ser-598, Ser-602, and Ser-606 each carry phosphoserine. Residues 596–621 (VKSTPASPVQSPTRAGTKSPAVSPSK) are compositionally biased toward polar residues. Thr-612 is subject to Phosphothreonine. Phosphoserine occurs at positions 614, 618, and 620. Basic and acidic residues-rich tracts occupy residues 622 to 631 (ASEDAKKTEV) and 639 to 654 (EPEK…KEEE). The residue at position 674 (Thr-674) is a Phosphothreonine. Phosphoserine occurs at positions 678, 685, 688, 692, 696, 698, 700, 702, and 712. Residues 687-700 (TSGPLSPEGSPSKS) are compositionally biased toward low complexity. A compositionally biased stretch (basic residues) spans 701–725 (PSKKKKKFRTPSFLKKSKKKEKVES). Residues 703–720 (KKKKKFRTPSFLKKSKKK) form an interaction with calmodulin region.

This sequence belongs to the aldolase class II family. Adducin subfamily. In terms of assembly, heterodimer of an alpha and a beta subunit. Found in a complex with ADD2, DMTN and SLC2A1. Interacts with SLC2A1. In terms of tissue distribution, found in liver, kidney, spleen, heart and brain.

It localises to the cytoplasm. The protein resides in the cytoskeleton. Its subcellular location is the cell membrane. Functionally, membrane-cytoskeleton-associated protein that promotes the assembly of the spectrin-actin network. Binds to the erythrocyte membrane receptor SLC2A1/GLUT1 and may therefore provide a link between the spectrin cytoskeleton to the plasma membrane. Binds to calmodulin. Calmodulin binds preferentially to the beta subunit. The protein is Beta-adducin (Add2) of Rattus norvegicus (Rat).